The following is a 494-amino-acid chain: Amidophosphoribosyltransferase (494 aa).

Positions 1–10 (MFNYSGLNEE) are excised as a propeptide. Catalysis depends on Cys11, which acts as the Nucleophile. The Glutamine amidotransferase type-2 domain maps to 11 to 231 (CGVFGIWNHP…AGEYVVINDK (221 aa)). Residues Ser294, Asp356, and Asp357 each contribute to the Mg(2+) site.

This sequence in the C-terminal section; belongs to the purine/pyrimidine phosphoribosyltransferase family. The cofactor is Mg(2+).

It carries out the reaction 5-phospho-beta-D-ribosylamine + L-glutamate + diphosphate = 5-phospho-alpha-D-ribose 1-diphosphate + L-glutamine + H2O. Its pathway is purine metabolism; IMP biosynthesis via de novo pathway; N(1)-(5-phospho-D-ribosyl)glycinamide from 5-phospho-alpha-D-ribose 1-diphosphate: step 1/2. Catalyzes the formation of phosphoribosylamine from phosphoribosylpyrophosphate (PRPP) and glutamine. The sequence is that of Amidophosphoribosyltransferase from Staphylococcus aureus (strain MRSA252).